The sequence spans 199 residues: DnaJ homolog subfamily C member 5B (199 aa).

Residues S14 and S16 each carry the phosphoserine modification. The J domain occupies 19–84; sequence ALYEILGLHK…SKRNIYDKYG (66 aa).

Interacts with the chaperone complex consisting of HSC70 and SGTA. Palmitoylated.

It is found in the membrane. In Sus scrofa (Pig), this protein is DnaJ homolog subfamily C member 5B (DNAJC5B).